We begin with the raw amino-acid sequence, 155 residues long: Cytochrome c-type biogenesis protein CcmE (155 aa).

At 1 to 8 (MNPIRKKR) the chain is on the cytoplasmic side. A helical; Signal-anchor for type II membrane protein transmembrane segment spans residues 9–29 (LYWILALLCGVSIAMALALSA). Residues 30–155 (LQENINLFYT…PKRVKQESTR (126 aa)) lie on the Periplasmic side of the membrane. Heme contacts are provided by His-124 and Tyr-128.

It belongs to the CcmE/CycJ family.

It is found in the cell inner membrane. Functionally, heme chaperone required for the biogenesis of c-type cytochromes. Transiently binds heme delivered by CcmC and transfers the heme to apo-cytochromes in a process facilitated by CcmF and CcmH. This chain is Cytochrome c-type biogenesis protein CcmE, found in Janthinobacterium sp. (strain Marseille) (Minibacterium massiliensis).